The primary structure comprises 572 residues: Proline--tRNA ligase (572 aa).

It belongs to the class-II aminoacyl-tRNA synthetase family. ProS type 1 subfamily. Homodimer.

It is found in the cytoplasm. The catalysed reaction is tRNA(Pro) + L-proline + ATP = L-prolyl-tRNA(Pro) + AMP + diphosphate. Catalyzes the attachment of proline to tRNA(Pro) in a two-step reaction: proline is first activated by ATP to form Pro-AMP and then transferred to the acceptor end of tRNA(Pro). As ProRS can inadvertently accommodate and process non-cognate amino acids such as alanine and cysteine, to avoid such errors it has two additional distinct editing activities against alanine. One activity is designated as 'pretransfer' editing and involves the tRNA(Pro)-independent hydrolysis of activated Ala-AMP. The other activity is designated 'posttransfer' editing and involves deacylation of mischarged Ala-tRNA(Pro). The misacylated Cys-tRNA(Pro) is not edited by ProRS. The chain is Proline--tRNA ligase from Escherichia coli O139:H28 (strain E24377A / ETEC).